We begin with the raw amino-acid sequence, 326 residues long: Putative HTH-type transcriptional regulatory protein MMP0678 (326 aa).

One can recognise an HTH cro/C1-type domain in the interval L128 to I183. Positions V139–Q158 form a DNA-binding region, H-T-H motif.

The protein is Putative HTH-type transcriptional regulatory protein MMP0678 of Methanococcus maripaludis (strain DSM 14266 / JCM 13030 / NBRC 101832 / S2 / LL).